The primary structure comprises 124 residues: Apolipoprotein C-IV (124 aa).

The N-terminal stretch at 1 to 27 is a signal peptide; it reads MLLPRRGLRTLPSLCLYILVLVWVVAC.

The protein belongs to the apolipoprotein C4 family. In terms of processing, glycosylated; contains sialic acid. Present in up to five sialylated isoforms. Blood plasma, associated primarily with VLDL and HDL. Expressed mainly in the liver.

The protein localises to the secreted. Functionally, may participate in lipoprotein metabolism. The polypeptide is Apolipoprotein C-IV (APOC4) (Oryctolagus cuniculus (Rabbit)).